A 165-amino-acid polypeptide reads, in one-letter code: MAHVALYPGSFDPVTNGHVDVVRQACTLVDRLIVAIGVHPGKAPLFSVDERRAMIVEVFSPLAATTGCAIECVTFDNLTVAAAEKSGATILIRGLRDGTDLDYEMQIAGMNQTLVPSVQTIFIPASPTVRPITATLVRQIASMGGDVSAFVPKAVAARLKAKFSQ.

Position 10 (Ser10) interacts with substrate. ATP is bound by residues 10–11 (SF) and His18. Residues Lys42, Thr79, and Arg93 each coordinate substrate. ATP contacts are provided by residues 94–96 (GLR), Glu104, and 129–135 (VRPITAT).

The protein belongs to the bacterial CoaD family. In terms of assembly, homohexamer. Mg(2+) serves as cofactor.

Its subcellular location is the cytoplasm. It carries out the reaction (R)-4'-phosphopantetheine + ATP + H(+) = 3'-dephospho-CoA + diphosphate. It functions in the pathway cofactor biosynthesis; coenzyme A biosynthesis; CoA from (R)-pantothenate: step 4/5. In terms of biological role, reversibly transfers an adenylyl group from ATP to 4'-phosphopantetheine, yielding dephospho-CoA (dPCoA) and pyrophosphate. The protein is Phosphopantetheine adenylyltransferase of Afipia carboxidovorans (strain ATCC 49405 / DSM 1227 / KCTC 32145 / OM5) (Oligotropha carboxidovorans).